The sequence spans 125 residues: Phosphoribosyl-AMP cyclohydrolase (125 aa).

Asp-80 contacts Mg(2+). Zn(2+) is bound at residue Cys-81. The Mg(2+) site is built by Asp-82 and Asp-84. Residues Cys-97 and Cys-104 each contribute to the Zn(2+) site.

The protein belongs to the PRA-CH family. In terms of assembly, homodimer. Requires Mg(2+) as cofactor. Zn(2+) serves as cofactor.

The protein localises to the cytoplasm. It carries out the reaction 1-(5-phospho-beta-D-ribosyl)-5'-AMP + H2O = 1-(5-phospho-beta-D-ribosyl)-5-[(5-phospho-beta-D-ribosylamino)methylideneamino]imidazole-4-carboxamide. Its pathway is amino-acid biosynthesis; L-histidine biosynthesis; L-histidine from 5-phospho-alpha-D-ribose 1-diphosphate: step 3/9. Catalyzes the hydrolysis of the adenine ring of phosphoribosyl-AMP. This is Phosphoribosyl-AMP cyclohydrolase from Leifsonia xyli subsp. xyli (strain CTCB07).